The primary structure comprises 222 residues: Riboflavin kinase (222 aa).

An H-T-H motif-like region spans residues 1–94 (METIDAEDAA…AKIFDVKDEQ (94 aa)). Residues 95–222 (YVLTGTVMSG…ENSEVVVVIG (128 aa)) form a riboflavin kinase region. 104-109 (GVGEGR) serves as a coordination point for CDP. Mg(2+)-binding residues include Thr-133 and Asn-135. 2 residues coordinate FMN: Thr-190 and Glu-198. 203-206 (TQLR) provides a ligand contact to CDP.

Belongs to the archaeal riboflavin kinase family. Mg(2+) is required as a cofactor.

It carries out the reaction riboflavin + CTP = CDP + FMN + H(+). The protein operates within cofactor biosynthesis; FMN biosynthesis; FMN from riboflavin (CTP route): step 1/1. Catalyzes the CTP-dependent phosphorylation of riboflavin (vitamin B2) to form flavin mononucleotide (FMN). In Methanocorpusculum labreanum (strain ATCC 43576 / DSM 4855 / Z), this protein is Riboflavin kinase (ribK).